A 92-amino-acid polypeptide reads, in one-letter code: Secreted RxLR effector protein RXLR-C02 (92 aa).

Residues 1 to 21 (MQFHLLVMTTIAASFAATGSA) form the signal peptide. A RxLR motif is present at residues 48–51 (RALR). The disordered stretch occupies residues 54–75 (ENRGLIGDDSDSSISDSDSEAK).

It belongs to the RxLR effector family.

It localises to the secreted. The protein resides in the host cytoplasm. Its subcellular location is the host nucleus. Its function is as follows. Secreted effector that suppresses pattern-triggered immunity (PTI) in plant host. In Plasmopara halstedii (Downy mildew of sunflower), this protein is Secreted RxLR effector protein RXLR-C02.